The primary structure comprises 227 residues: Enolase-phosphatase E1 (227 aa).

Residues aspartate 11 and glutamate 13 each contribute to the Mg(2+) site. Substrate contacts are provided by residues 118–119 (SS) and lysine 161. Mg(2+) is bound at residue aspartate 186.

This sequence belongs to the HAD-like hydrolase superfamily. MasA/MtnC family. As to quaternary structure, monomer. Mg(2+) serves as cofactor.

It is found in the cytoplasm. Its subcellular location is the nucleus. It carries out the reaction 5-methylsulfanyl-2,3-dioxopentyl phosphate + H2O = 1,2-dihydroxy-5-(methylsulfanyl)pent-1-en-3-one + phosphate. The protein operates within amino-acid biosynthesis; L-methionine biosynthesis via salvage pathway; L-methionine from S-methyl-5-thio-alpha-D-ribose 1-phosphate: step 3/6. It participates in amino-acid biosynthesis; L-methionine biosynthesis via salvage pathway; L-methionine from S-methyl-5-thio-alpha-D-ribose 1-phosphate: step 4/6. Bifunctional enzyme that catalyzes the enolization of 2,3-diketo-5-methylthiopentyl-1-phosphate (DK-MTP-1-P) into the intermediate 2-hydroxy-3-keto-5-methylthiopentenyl-1-phosphate (HK-MTPenyl-1-P), which is then dephosphorylated to form the acireductone 1,2-dihydroxy-3-keto-5-methylthiopentene (DHK-MTPene). The chain is Enolase-phosphatase E1 from Saccharomyces cerevisiae (strain JAY291) (Baker's yeast).